The sequence spans 172 residues: Large ribosomal subunit protein uL10 (172 aa).

Belongs to the universal ribosomal protein uL10 family. As to quaternary structure, part of the ribosomal stalk of the 50S ribosomal subunit. The N-terminus interacts with L11 and the large rRNA to form the base of the stalk. The C-terminus forms an elongated spine to which L12 dimers bind in a sequential fashion forming a multimeric L10(L12)X complex.

Its function is as follows. Forms part of the ribosomal stalk, playing a central role in the interaction of the ribosome with GTP-bound translation factors. This Afipia carboxidovorans (strain ATCC 49405 / DSM 1227 / KCTC 32145 / OM5) (Oligotropha carboxidovorans) protein is Large ribosomal subunit protein uL10.